A 206-amino-acid chain; its full sequence is Large ribosomal subunit protein uL4 (206 aa).

Residues 63–97 (MYKQKGTGRARHHSARAPQFRGGGKAHGPVVRSHE) are disordered. Over residues 64–77 (YKQKGTGRARHHSA) the composition is skewed to basic residues.

Belongs to the universal ribosomal protein uL4 family. Part of the 50S ribosomal subunit.

Functionally, one of the primary rRNA binding proteins, this protein initially binds near the 5'-end of the 23S rRNA. It is important during the early stages of 50S assembly. It makes multiple contacts with different domains of the 23S rRNA in the assembled 50S subunit and ribosome. In terms of biological role, forms part of the polypeptide exit tunnel. This Rhizobium rhizogenes (strain K84 / ATCC BAA-868) (Agrobacterium radiobacter) protein is Large ribosomal subunit protein uL4.